Here is a 448-residue protein sequence, read N- to C-terminus: MTLPAFKAYDIRGRVPDELNEDLARRIGVALAAQLDQGPVVLGHDVRLASPALQEALSAGLRASGREVIDIGLCGTEEVYFQTDHLKAAGGVMVTASHNPMDYNGMKLVREQARPISSDTGLFAIRDTVAADTAAAGEPTAAEHSRTDKTAYLEHLLSYVDRSTLKPLKLVVNAGNGGAGLIVDLLAPHLPFEFVRVFHEPDGNFPNGIPNPLLQENRDATAKAVKEHGADFGIAWDGDFDRCFFFDHTGRFIEGYYLVGLLAQAILAKQPGGKVVHDPRLTWNTVEMVEDAGGIPVLCKSGHAFIKEKMRSENAVYGGEMSAHHYFREFAYADSGMIPWLLIAELVSQSGRSLADLVEARMQKFPCSGEINFKVDDAKAAVARVMAHYGDQSPELDYTDGISADFGQWRFNLRSSNTEPLLRLNVETRGDAALLETRTQEISNLLRG.

The Phosphoserine intermediate role is filled by Ser-97. Residues Ser-97, Asp-237, Asp-239, and Asp-241 each contribute to the Mg(2+) site.

Belongs to the phosphohexose mutase family. Mg(2+) serves as cofactor.

The enzyme catalyses alpha-D-glucose 1-phosphate = alpha-D-glucose 6-phosphate. It catalyses the reaction alpha-D-mannose 1-phosphate = D-mannose 6-phosphate. The protein operates within nucleotide-sugar biosynthesis; GDP-alpha-D-mannose biosynthesis; alpha-D-mannose 1-phosphate from D-fructose 6-phosphate: step 2/2. Involved in xanthan production. The polypeptide is Phosphohexose mutases (xanA) (Xanthomonas campestris pv. campestris (strain B100)).